Consider the following 506-residue polypeptide: 2-isopropylmalate synthase (506 aa).

Residues 6–267 (IIVFDTTLRD…YTDIVTKEIY (262 aa)) enclose the Pyruvate carboxyltransferase domain. Asp15, His201, His203, and Asn237 together coordinate Mn(2+). The segment at 391-506 (SIQTLSTSSC…LNSYLSMKNR (116 aa)) is regulatory domain.

It belongs to the alpha-IPM synthase/homocitrate synthase family. LeuA type 1 subfamily. In terms of assembly, homodimer. Mn(2+) is required as a cofactor.

It is found in the cytoplasm. It carries out the reaction 3-methyl-2-oxobutanoate + acetyl-CoA + H2O = (2S)-2-isopropylmalate + CoA + H(+). Its pathway is amino-acid biosynthesis; L-leucine biosynthesis; L-leucine from 3-methyl-2-oxobutanoate: step 1/4. Functionally, catalyzes the condensation of the acetyl group of acetyl-CoA with 3-methyl-2-oxobutanoate (2-ketoisovalerate) to form 3-carboxy-3-hydroxy-4-methylpentanoate (2-isopropylmalate). The polypeptide is 2-isopropylmalate synthase (Campylobacter fetus subsp. fetus (strain 82-40)).